The following is a 1840-amino-acid chain: Neurexin 1 (1840 aa).

The tract at residues 1 to 50 is disordered; that stretch reads MKAPHSATYQDNYADAAMTARTRPSMDMDQQRNRNQAELRLLPAQRTSTS. Residues 1–1696 are Extracellular-facing; that stretch reads MKAPHSATYQ…NSIEEERTAM (1696 aa). Residues 24-37 are compositionally biased toward basic and acidic residues; that stretch reads PSMDMDQQRNRNQA. Residues 104–289 enclose the Laminin G-like 1 domain; sequence GFQLDGSQNS…RDIKCGDVPC (186 aa). In terms of domain architecture, EGF-like 1 spans 309–347; that stretch reads TTDACERNDPCQHGGICISTDSGPICECRNLEYDGQYCE. Cystine bridges form between cysteine 313–cysteine 325, cysteine 319–cysteine 334, cysteine 336–cysteine 346, cysteine 511–cysteine 547, cysteine 710–cysteine 739, cysteine 746–cysteine 757, cysteine 751–cysteine 766, and cysteine 768–cysteine 778. Laminin G-like domains lie at 352-547 and 554-739; these read PSEA…EYQC and DPVT…KPSC. Residues 742 to 779 form the EGF-like 2 domain; sequence QANVCNGNPCLNGGTCLEGWNRPICDCSATLYGGPTCG. 2 consecutive Laminin G-like domains span residues 784-964 and 982-1158; these read TLAF…LPSA and HAAT…VSGC. 4 disulfide bridges follow: cysteine 1130–cysteine 1158, cysteine 1164–cysteine 1175, cysteine 1169–cysteine 1184, and cysteine 1186–cysteine 1196. An EGF-like 3 domain is found at 1160–1197; it reads GPTKCSQNACANRGNCVQQWNAYACECDMTSYTGPTCY. The region spanning 1201 to 1416 is the Laminin G-like 6 domain; the sequence is IAYEFGNNKG…LIFSGAGSGC (216 aa). The disordered stretch occupies residues 1411 to 1651; the sequence is GAGSGCRGDD…DEHHPLPPLP (241 aa). The span at 1447 to 1472 shows a compositional bias: low complexity; it reads QTTTSQQGNSLSTGGSSSGGVITNGT. The segment covering 1491–1527 has biased composition (polar residues); that stretch reads TTEQFTSTSTARGSESNNEMVTITTTGRSDVTTEQHQ. A compositionally biased stretch (low complexity) spans 1528 to 1600; it reads GSSSSSSSGS…TTTTTTTTQA (73 aa). The segment covering 1632-1646 has biased composition (basic and acidic residues); the sequence is RNDHDRMQLPDEHHP. The chain crosses the membrane as a helical span at residues 1697 to 1717; the sequence is IIGIVAGILIAVVLVILLVLW. At 1718 to 1840 the chain is on the cytoplasmic side; the sequence is LKSNGDRGYK…DSKDVKEWYV (123 aa). Residues 1737 to 1840 are disordered; the sequence is GSHNPNAALL…DSKDVKEWYV (104 aa). A compositionally biased stretch (polar residues) spans 1747–1757; sequence GNTSTNGSYHQ. Low complexity predominate over residues 1774-1787; the sequence is QQQHHAQQQMHNGH. A compositionally biased stretch (gly residues) spans 1788–1813; sequence NGNGNGGGGGGGGMMSSGSGSLGYGS. 2 residues coordinate Zn(2+): aspartate 1831 and aspartate 1834. The segment covering 1831 to 1840 has biased composition (basic and acidic residues); sequence DSKDVKEWYV. The short motif at 1837–1840 is the PDZ domain binding element; that stretch reads EWYV.

This sequence belongs to the neurexin family. Interacts (via C-terminal PDZ binding motif) with CASK (via PDZ domain). Interacts (via cytoplasmic domain) with apolpp/ApoLI; the interaction supports apolpp/ApoLI protein stability. Interact (via cytoplasmic domain) with Spn/Spinophilin. Interacts with RhoGAP100F/Syd-1 (via PDZ domain); RhoGAP100F/Syd-1 may recruit Nrx-1 to the presynaptic active zone. Expressed in brain, with expression in medulla, lamina, lobula, lobula plate, mushroom body and antennal lobe, and in retina (at protein level). Expressed in rabdomere of photoreceptor cells (at protein level).

The protein resides in the synaptic cell membrane. It localises to the presynaptic cell membrane. The protein localises to the postsynaptic cell membrane. In terms of biological role, neuronal cell adhesion protein involved in synapse formation, development of synaptic active zones, synaptic regulation and visual function. Plays a role in cell adhesion between the pre- and the postsynaptic cell. Required for proper proliferation of synaptic boutons during larval development, a process necessary for coordinated matching of pre-and postsynaptic compartments. Promotes presynaptic active zone formation and neurotransmitter release. Spn/Spinophilin fine-tunes nrx-1/nlg1 signaling at the pre-synapse to control active zone number and functionality and thereby optimizing action potential-induced exocytosis. Required for synapse formation in central nervous system. By regulating synapse formation, may play a role in larval associative learning. Together with RhoGAP100F/syd-1, controls synapse formation at the neuromuscular junction. Essential for synaptic vesicle cycling, which plays critical roles in neurotransmission at neuromuscular junctions (NMJ). Regulated and restricts formation of glutamate receptor clusters. Mediates retinoid transport and subsequent rhodopsin maturation and may regulate lipoprotein function; thereby playing a role in vision. Regulates sleep, circadian rhythm and synaptic plasticity. Together with CASK, required for locomotion. The protein is Neurexin 1 of Drosophila melanogaster (Fruit fly).